Here is a 1227-residue protein sequence, read N- to C-terminus: JNK-interacting protein 3 (1227 aa).

A disordered region spans residues 1 to 22; that stretch reads MMDNDDALLNNGGPQSGAETVY. Positions 25–113 constitute an RH1 domain; that stretch reads EDNNMVMSEK…VTQYEREKSA (89 aa). The stretch at 84–191 forms a coiled coil; the sequence is RINQEQDVEV…TELFKNHVDY (108 aa). A disordered region spans residues 281-323; the sequence is DALQQQHHATSPQSPDSSPVVPNVPTNVGRSTTKKEQRSDNNL. The segment covering 290-308 has biased composition (low complexity); the sequence is TSPQSPDSSPVVPNVPTNV. Residues 363–489 adopt a coiled-coil conformation; sequence GKEVENLIME…EAVRLTEILR (127 aa). In terms of domain architecture, RH2 spans 453 to 524; sequence RKRFTRVEMA…PSNRPTERVA (72 aa). 3 disordered regions span residues 517-572, 804-851, and 863-889; these read NRPT…HPAS, GKVE…AEEP, and PLPG…SSSN. Gly residues predominate over residues 526–540; it reads GLGGGPMFRHTGGGS. Low complexity predominate over residues 541 to 550; sequence PAHSHGSPSR. The span at 807–817 shows a compositional bias: basic and acidic residues; it reads EFVRVKPKSDD. Positions 814 to 849 form a coiled coil; that stretch reads KSDDEQNSNEKQQQEEEEAKEATEKSNEQLPAVSAE. Positions 879 to 889 are enriched in low complexity; the sequence is NNNNNSSSSSN.

The protein belongs to the JIP scaffold family. Forms homo- and heterooligomeric complexes. Binds the TPR motif-containing C-terminal of kinesin light chain, Klc. Pre-assembled syd scaffolding complexes are then transported as a cargo of kinesin, to the required subcellular location.

Its subcellular location is the cytoplasm. Its function is as follows. The JNK-interacting protein (JIP) group of scaffold proteins selectively mediates JNK-signaling by aggregating specific components of the MAPK cascade to form a functional JNK signaling module. May function as a regulator of vesicle transport, through interactions with the JNK-signaling components and motor proteins. Syd is required for efficient kinesin-I mediated axonal transport. The polypeptide is JNK-interacting protein 3 (syd) (Drosophila melanogaster (Fruit fly)).